A 613-amino-acid chain; its full sequence is AP-5 complex subunit mu (613 aa).

The 255-residue stretch at 309–563 (KQRLLFTIHE…DYAKVSFKIV (255 aa)) folds into the MHD domain. The disordered stretch occupies residues 501 to 522 (SPLQSRRKGDGDDEESEDESAE). Acidic residues predominate over residues 511–521 (GDDEESEDESA).

The protein belongs to the adaptor complexes medium subunit family. In terms of assembly, probably part of the adaptor protein complex 5 (AP-5).

The protein resides in the cytoplasmic vesicle membrane. This Arabidopsis thaliana (Mouse-ear cress) protein is AP-5 complex subunit mu (AP5M).